Here is a 94-residue protein sequence, read N- to C-terminus: PqqA binding protein (94 aa).

The protein belongs to the PqqD family. Monomer. Interacts with PqqE.

Its pathway is cofactor biosynthesis; pyrroloquinoline quinone biosynthesis. Functionally, functions as a PqqA binding protein and presents PqqA to PqqE, in the pyrroloquinoline quinone (PQQ) biosynthetic pathway. The chain is PqqA binding protein from Pseudomonas syringae pv. syringae (strain B728a).